A 231-amino-acid chain; its full sequence is Ribonuclease 3 (231 aa).

The RNase III domain maps to 1-134; that stretch reads MKTLEKKLAE…FLGALLLDAG (134 aa). Glu-47 contributes to the Mg(2+) binding site. The active site involves Asp-51. Residues Asp-120 and Glu-123 each contribute to the Mg(2+) site. Residue Glu-123 is part of the active site. The DRBM domain maps to 160-229; it reads DYKTALQELL…AKNALEKLQR (70 aa).

Belongs to the ribonuclease III family. Homodimer. Requires Mg(2+) as cofactor.

The protein resides in the cytoplasm. The enzyme catalyses Endonucleolytic cleavage to 5'-phosphomonoester.. In terms of biological role, digests double-stranded RNA. Involved in the processing of primary rRNA transcript to yield the immediate precursors to the large and small rRNAs (23S and 16S). Also processes some mRNAs, and tRNAs when they are encoded in the rRNA operon. CRISPR (clustered regularly interspaced short palindromic repeat) is an adaptive immune system that provides protection against mobile genetic elements (viruses, transposable elements and conjugative plasmids). CRISPR clusters contain spacers, sequences complementary to antecedent mobile elements, and target invading nucleic acids. CRISPR clusters are transcribed and processed into CRISPR RNA (crRNA). In this organism endogenous ribonuclease 3 and Cas9 are required for correct coprocessing of pre-crRNA and the trans-encoded small RNA (tracrRNA). Cas9, crRNA and tracrRNA are required for cleavage of invading DNA. Complements pre-crRNA and tracrRNA coprocessing defects in an rnc deletion in S.pyogenes strain 370. This chain is Ribonuclease 3, found in Streptococcus mutans serotype c (strain ATCC 700610 / UA159).